The sequence spans 302 residues: Aliphatic sulfonates import ATP-binding protein SsuB (302 aa).

Low complexity predominate over residues 30–57 (PATADAQHTADAQHTADAQHTADAQHTA). Positions 30-65 (PATADAQHTADAQHTADAQHTADAQHTAETAETRGA) are disordered. The ABC transporter domain occupies 70–284 (IRIRGLRRTF…RRTDPAFDRL (215 aa)). 102 to 109 (GRSGSGKS) provides a ligand contact to ATP.

This sequence belongs to the ABC transporter superfamily. Aliphatic sulfonates importer (TC 3.A.1.17.2) family. As to quaternary structure, the complex is composed of two ATP-binding proteins (SsuB), two transmembrane proteins (SsuC) and a solute-binding protein (SsuA).

Its subcellular location is the cell membrane. It carries out the reaction ATP + H2O + aliphatic sulfonate-[sulfonate-binding protein]Side 1 = ADP + phosphate + aliphatic sulfonateSide 2 + [sulfonate-binding protein]Side 1.. Part of the ABC transporter complex SsuABC involved in aliphatic sulfonates import. Responsible for energy coupling to the transport system. This chain is Aliphatic sulfonates import ATP-binding protein SsuB, found in Frankia casuarinae (strain DSM 45818 / CECT 9043 / HFP020203 / CcI3).